The primary structure comprises 321 residues: MVAPKWVFISFMILLSLAICSGQPVTSDAIKAKEADHDNLKAHTLSNIDAKGFGGGGGFGIGGGWAGGGGGGGDGGGSDTPNYGYNPGCSIHGCTVPGFGFLPKPVFGVPVYSPGCGYVCPADIPTGGMTESKITGISQSARLYRCKPGPNMCDSKDCNELLLHFVFPMQDKHDNKQEHLRYGGRRGIGLTVGGVGGFGIGFGAWGGGGGGGGGGSDAPGCSNDGCDPGFGCPPGCGYACPANNPSGGITEFHISGLSRFDGPYRCRPDMCESEDCNELLLHFVSPMQHKHENRHDHIVERSDEEEAHHQSKQHKDEDIIN.

The tract at residues 301 to 321 is disordered; sequence RSDEEEAHHQSKQHKDEDIIN.

In terms of tissue distribution, anther specific (tapetal cells).

This is Anther-specific protein TA-29 (TA-29) from Nicotiana tabacum (Common tobacco).